Reading from the N-terminus, the 187-residue chain is Flavin-dependent monooxygenase, reductase subunit HsaB (187 aa).

Residues 32–36 (PVGFA), 38–39 (QS), 53–55 (CPT), 59–60 (RS), and 85–86 (RF) contribute to the FAD site. NAD(+) is bound at residue 152 to 155 (FYRG).

It belongs to the non-flavoprotein flavin reductase family. HsaAB monooxygenase consists of an oxygenase component HsaA and a reductase component HsaB.

The enzyme catalyses a reduced flavin + NAD(+) = an oxidized flavin + NADH + 2 H(+). The protein operates within lipid metabolism; steroid biosynthesis. Functionally, catalyzes the reduction of free flavins (FMN or FAD) by NADH. Subsequently, the reduced flavins diffuse to the HsaA oxygenase subunit. This is Flavin-dependent monooxygenase, reductase subunit HsaB (hsaB) from Mycobacterium tuberculosis (strain CDC 1551 / Oshkosh).